Here is a 347-residue protein sequence, read N- to C-terminus: Protein RecA (347 aa).

ATP is bound at residue 66–73 (GPESSGKT).

The protein belongs to the RecA family.

It localises to the cytoplasm. Its function is as follows. Can catalyze the hydrolysis of ATP in the presence of single-stranded DNA, the ATP-dependent uptake of single-stranded DNA by duplex DNA, and the ATP-dependent hybridization of homologous single-stranded DNAs. It interacts with LexA causing its activation and leading to its autocatalytic cleavage. The polypeptide is Protein RecA (Methylococcus capsulatus (strain ATCC 33009 / NCIMB 11132 / Bath)).